Here is a 284-residue protein sequence, read N- to C-terminus: Tropomyosin-2 (284 aa).

A coiled-coil region spans residues M1–Y284. The disordered stretch occupies residues E82–Q110.

Belongs to the tropomyosin family. In terms of assembly, homodimer.

Functionally, tropomyosin, in association with the troponin complex, plays a central role in the calcium dependent regulation of muscle contraction. May also regulate motor systems required to maintain nuclear integrity and apico-basal polarity during embryogenesis. The chain is Tropomyosin-2 (Tm2) from Drosophila melanogaster (Fruit fly).